A 265-amino-acid chain; its full sequence is Mlc titration factor A (265 aa).

Zn(2+) is bound by residues His111, His148, His152, and Glu211.

It belongs to the MtfA family. In terms of assembly, interacts with Mlc. It depends on Zn(2+) as a cofactor.

It localises to the cytoplasm. Involved in the modulation of the activity of the glucose-phosphotransferase system (glucose-PTS). Interacts with the transcriptional repressor Mlc, preventing its interaction with DNA and leading to the modulation of expression of genes regulated by Mlc, including ptsG, which encodes the PTS system glucose-specific EIICB component. Its function is as follows. Shows zinc-dependent metallopeptidase activity. The polypeptide is Mlc titration factor A (Cronobacter sakazakii (strain ATCC BAA-894) (Enterobacter sakazakii)).